The primary structure comprises 944 residues: MFQNSMKQRMNWEDFYGPNLGYALELYDQYTQDPNSIDPDLKEMFDELGAPPSDIKEASGTKEKGRVTADLIQKIASAVRLAEDIRTYGHLNASVNPLRKDEKKSELFPLSDYGLTEEEIKAIPASVICKDAPKNISNGLEAIQYLRNTYKRTISFEFDHVHDFKEREWLTRKIESGELFQKNSAEKLSAVLERLTEVEGFEQFLHRTFVGQKRFSIEGLDALVPVLDDIIAQSVKSGTTSVNIGMAHRGRLNVLAHVLGKPYEIIFSEFQHAPNKDLVPSEGSIGISYGWTGDVKYHLGANRELQDAETKSARITLANNPSHLEFINPIVEGSTRAAQETRTQSGYPVQDETKSLAILIHGDAAFPGEGIVAETLNLSSLKGYQVGGAIHIIANNMIGFTTESAESRSTKYASDLAKGYEIPIVHVNADDPEACLSAVKFAVEYRKTFNKDFLIDLIGYRRYGHNEMDEPSTTQPMLYDAVRKHPTVKQIFAEKLVKEGVVTEEVVQNIEKSVTKRIEDAYQKVPSKKEHTACEIELPEPVSNGFPDVDTSIDFDVLRKLNGELINWPESFNVFGKLKRILERRAKAFDDDRKVEWSLAESLAFASILKDGTPIRLTGQDSERGTFAQRNLVLHDSETGKEFVPLHHLSDCSTSFAVHNSPLSEGSVLGFEYGYNVHSPETLVLWEAQYGDFANAAQVYFDQFISAGRAKWGQKSGLVMLLPHGYEGQGPEHSSGRIERFLQLAAENNWTVANLTSAAQYFHILRRQAKMLLREEIRPLVIMTPKSLLRNPNTVSEVQELSESRFQPVYEQSGLSHDYEKVTRLVLSSGKVSIDISDHFNKLEDGKEWLHIARIEQLYPFPAKGVKELFAKLPNLKEIVWVQEEPQNMGAWGYISPYLTEIAPEGVSVQYIGRRRRSSPAEGDPTVHKKEQERIVSDSLTRKN.

Residues 914–944 (RRRRSSPAEGDPTVHKKEQERIVSDSLTRKN) are disordered. Residues 925–936 (PTVHKKEQERIV) show a composition bias toward basic and acidic residues.

Belongs to the alpha-ketoglutarate dehydrogenase family. Homodimer. Part of the 2-oxoglutarate dehydrogenase (OGDH) complex composed of E1 (2-oxoglutarate dehydrogenase), E2 (dihydrolipoamide succinyltransferase) and E3 (dihydrolipoamide dehydrogenase); the complex contains multiple copies of the three enzymatic components (E1, E2 and E3). The cofactor is thiamine diphosphate.

It carries out the reaction N(6)-[(R)-lipoyl]-L-lysyl-[protein] + 2-oxoglutarate + H(+) = N(6)-[(R)-S(8)-succinyldihydrolipoyl]-L-lysyl-[protein] + CO2. Functionally, E1 component of the 2-oxoglutarate dehydrogenase (OGDH) complex which catalyzes the decarboxylation of 2-oxoglutarate, the first step in the conversion of 2-oxoglutarate to succinyl-CoA and CO(2). In Bacillus subtilis (strain 168), this protein is 2-oxoglutarate dehydrogenase E1 component.